Consider the following 155-residue polypeptide: Ribosomal RNA large subunit methyltransferase H (155 aa).

Residues Leu73, Gly104, and Ile123–Phe128 contribute to the S-adenosyl-L-methionine site.

The protein belongs to the RNA methyltransferase RlmH family. In terms of assembly, homodimer.

The protein resides in the cytoplasm. The catalysed reaction is pseudouridine(1915) in 23S rRNA + S-adenosyl-L-methionine = N(3)-methylpseudouridine(1915) in 23S rRNA + S-adenosyl-L-homocysteine + H(+). In terms of biological role, specifically methylates the pseudouridine at position 1915 (m3Psi1915) in 23S rRNA. The polypeptide is Ribosomal RNA large subunit methyltransferase H (Francisella tularensis subsp. novicida (strain U112)).